We begin with the raw amino-acid sequence, 341 residues long: MAQRITLHDMTLRDGMHPKRHQISLEQMKGIARGLDAAGVPLIEVTHGDGLGGASVNYGFPAHSDEEYLRAVLGELKQARVSALLLPGIGTVDHLRMAHEIGVQTIRVATHCTEADVSEQHIGMARKLGMDTVGFLMMAHMAPVQTLVQQALLMESYGANCLYITDSAGHMLPHDVTEKLTAVRQALRPETELGFHGHHNLAMGVANSLAAITCGATRIDAAAAGLGAGAGNTPMEVLVAVCERMGIETGVDVFRIADVAEDLVVPIMDHPIRIDRDALTLGYAGVYSSFLLFAKRAEAKYRIPAREILVELGRQRLVGGQEDMIEDTAITLARARGLPVA.

Residues 5 to 257 (ITLHDMTLRD…ETGVDVFRIA (253 aa)) enclose the Pyruvate carboxyltransferase domain. 13 to 14 (RD) is a substrate binding site. Aspartate 14 contributes to the Mn(2+) binding site. Histidine 17 functions as the Proton acceptor in the catalytic mechanism. The substrate site is built by serine 167 and histidine 196. Positions 196 and 198 each coordinate Mn(2+). Tyrosine 287 contributes to the substrate binding site.

It belongs to the 4-hydroxy-2-oxovalerate aldolase family.

The catalysed reaction is (S)-4-hydroxy-2-oxopentanoate = acetaldehyde + pyruvate. The polypeptide is 4-hydroxy-2-oxovalerate aldolase (mhpE) (Cupriavidus taiwanensis (strain DSM 17343 / BCRC 17206 / CCUG 44338 / CIP 107171 / LMG 19424 / R1) (Ralstonia taiwanensis (strain LMG 19424))).